Reading from the N-terminus, the 59-residue chain is Cytochrome c oxidase subunit 7 (59 aa).

At 1–24 the chain is on the mitochondrial matrix side; that stretch reads MKNTIVQQQRFLQSIHKPTYLQRP. A helical transmembrane segment spans residues 25–47; that stretch reads GSFALVYPYYAVMAGLGLYSLYA. Residues 48-59 are Mitochondrial intermembrane-facing; sequence SGRVIFGKKDAF.

This sequence belongs to the cytochrome c oxidase subunit 7 family. As to quaternary structure, component of the cytochrome c oxidase (complex IV, CIV), a multisubunit enzyme composed of a catalytic core of 3 subunits and several supernumerary subunits. The complex exists as a monomer or a dimer and forms supercomplexes (SCs) in the inner mitochondrial membrane with ubiquinol-cytochrome c oxidoreductase (cytochrome b-c1 complex, complex III, CIII).

It is found in the mitochondrion inner membrane. Its pathway is energy metabolism; oxidative phosphorylation. Its function is as follows. Component of the cytochrome c oxidase, the last enzyme in the mitochondrial electron transport chain which drives oxidative phosphorylation. The respiratory chain contains 3 multisubunit complexes succinate dehydrogenase (complex II, CII), ubiquinol-cytochrome c oxidoreductase (cytochrome b-c1 complex, complex III, CIII) and cytochrome c oxidase (complex IV, CIV), that cooperate to transfer electrons derived from NADH and succinate to molecular oxygen, creating an electrochemical gradient over the inner membrane that drives transmembrane transport and the ATP synthase. Cytochrome c oxidase is the component of the respiratory chain that catalyzes the reduction of oxygen to water. Electrons originating from reduced cytochrome c in the intermembrane space (IMS) are transferred via the dinuclear copper A center (CU(A)) of subunit 2 and heme A of subunit 1 to the active site in subunit 1, a binuclear center (BNC) formed by heme A3 and copper B (CU(B)). The BNC reduces molecular oxygen to 2 water molecules using 4 electrons from cytochrome c in the IMS and 4 protons from the mitochondrial matrix. The chain is Cytochrome c oxidase subunit 7 (cox7) from Schizosaccharomyces pombe (strain 972 / ATCC 24843) (Fission yeast).